The following is a 275-amino-acid chain: 4-deoxy-L-threo-5-hexosulose-uronate ketol-isomerase (275 aa).

Zn(2+)-binding residues include His-193, His-195, Glu-200, and His-242.

Belongs to the KduI family. It depends on Zn(2+) as a cofactor.

The enzyme catalyses 5-dehydro-4-deoxy-D-glucuronate = 3-deoxy-D-glycero-2,5-hexodiulosonate. It participates in glycan metabolism; pectin degradation; 2-dehydro-3-deoxy-D-gluconate from pectin: step 4/5. In terms of biological role, catalyzes the isomerization of 5-dehydro-4-deoxy-D-glucuronate to 3-deoxy-D-glycero-2,5-hexodiulosonate. In Bacillus pumilus (strain SAFR-032), this protein is 4-deoxy-L-threo-5-hexosulose-uronate ketol-isomerase.